A 715-amino-acid chain; its full sequence is Bromodomain-containing protein DDB_G0278469 (715 aa).

Disordered stretches follow at residues E18–A46 and Q186–Q425. 5 stretches are compositionally biased toward low complexity: residues N20–N45, Q186–Q204, L215–T227, T234–K254, and S261–T281. The span at K307–M316 shows a compositional bias: basic and acidic residues. Residues S322–T368 adopt a coiled-coil conformation. Acidic residues predominate over residues E332 to L359. The span at T366–S389 shows a compositional bias: polar residues. Low complexity predominate over residues K405–R414. Residues K437 to D470 are a coiled coil. Residues K474–T599 enclose the Bromo domain. Residues L653–N715 form a disordered region. The segment covering L662–D672 has biased composition (polar residues). Residues Q684–N715 show a composition bias toward acidic residues.

This Dictyostelium discoideum (Social amoeba) protein is Bromodomain-containing protein DDB_G0278469.